The following is a 429-amino-acid chain: Glutamyl-tRNA reductase (429 aa).

Residues 49 to 52, Ser107, 112 to 114, and Gln118 each bind substrate; these read TCNR and EPQ. Residue Cys50 is the Nucleophile of the active site. 187–192 contacts NADP(+); it reads GAGKTI.

It belongs to the glutamyl-tRNA reductase family. In terms of assembly, homodimer.

The catalysed reaction is (S)-4-amino-5-oxopentanoate + tRNA(Glu) + NADP(+) = L-glutamyl-tRNA(Glu) + NADPH + H(+). Its pathway is porphyrin-containing compound metabolism; protoporphyrin-IX biosynthesis; 5-aminolevulinate from L-glutamyl-tRNA(Glu): step 1/2. Catalyzes the NADPH-dependent reduction of glutamyl-tRNA(Glu) to glutamate 1-semialdehyde (GSA). This Marinobacter nauticus (strain ATCC 700491 / DSM 11845 / VT8) (Marinobacter aquaeolei) protein is Glutamyl-tRNA reductase.